We begin with the raw amino-acid sequence, 891 residues long: DNA mismatch repair protein MutS (891 aa).

646–653 contributes to the ATP binding site; sequence GPNMAGKS.

The protein belongs to the DNA mismatch repair MutS family.

In terms of biological role, this protein is involved in the repair of mismatches in DNA. It is possible that it carries out the mismatch recognition step. This protein has a weak ATPase activity. This chain is DNA mismatch repair protein MutS, found in Rickettsia canadensis (strain McKiel).